Here is a 316-residue protein sequence, read N- to C-terminus: Pantothenate kinase (316 aa).

An ATP-binding site is contributed by 95–102; it reads GSVAVGKS.

This sequence belongs to the prokaryotic pantothenate kinase family.

It localises to the cytoplasm. It carries out the reaction (R)-pantothenate + ATP = (R)-4'-phosphopantothenate + ADP + H(+). The protein operates within cofactor biosynthesis; coenzyme A biosynthesis; CoA from (R)-pantothenate: step 1/5. The chain is Pantothenate kinase (coaA) from Halalkalibacterium halodurans (strain ATCC BAA-125 / DSM 18197 / FERM 7344 / JCM 9153 / C-125) (Bacillus halodurans).